A 121-amino-acid chain; its full sequence is NADH-quinone oxidoreductase subunit A 1 (121 aa).

Helical transmembrane passes span 6–26 (FPIF…LSIG), 62–82 (LVAM…PWAV), and 90–110 (FYGL…YYYI).

It belongs to the complex I subunit 3 family. In terms of assembly, NDH-1 is composed of 14 different subunits. Subunits NuoA, H, J, K, L, M, N constitute the membrane sector of the complex.

The protein localises to the cell inner membrane. It catalyses the reaction a quinone + NADH + 5 H(+)(in) = a quinol + NAD(+) + 4 H(+)(out). In terms of biological role, NDH-1 shuttles electrons from NADH, via FMN and iron-sulfur (Fe-S) centers, to quinones in the respiratory chain. The immediate electron acceptor for the enzyme in this species is believed to be a menaquinone. Couples the redox reaction to proton translocation (for every two electrons transferred, four hydrogen ions are translocated across the cytoplasmic membrane), and thus conserves the redox energy in a proton gradient. This is NADH-quinone oxidoreductase subunit A 1 from Chloroherpeton thalassium (strain ATCC 35110 / GB-78).